Here is a 443-residue protein sequence, read N- to C-terminus: Ribosomal protein uS12 methylthiotransferase RimO (443 aa).

The MTTase N-terminal domain occupies Pro-5–Pro-115. Cys-14, Cys-50, Cys-79, Cys-147, Cys-151, and Cys-154 together coordinate [4Fe-4S] cluster. The Radical SAM core domain maps to Leu-133–Ala-374. The region spanning Gln-377–Tyr-443 is the TRAM domain.

The protein belongs to the methylthiotransferase family. RimO subfamily. The cofactor is [4Fe-4S] cluster.

The protein localises to the cytoplasm. The catalysed reaction is L-aspartate(89)-[ribosomal protein uS12]-hydrogen + (sulfur carrier)-SH + AH2 + 2 S-adenosyl-L-methionine = 3-methylsulfanyl-L-aspartate(89)-[ribosomal protein uS12]-hydrogen + (sulfur carrier)-H + 5'-deoxyadenosine + L-methionine + A + S-adenosyl-L-homocysteine + 2 H(+). Catalyzes the methylthiolation of an aspartic acid residue of ribosomal protein uS12. The sequence is that of Ribosomal protein uS12 methylthiotransferase RimO from Haemophilus ducreyi (strain 35000HP / ATCC 700724).